The primary structure comprises 927 residues: E3 ubiquitin-protein ligase HOS1 (927 aa).

An RING-type; degenerate zinc finger spans residues 53–93; that stretch reads CRATRDLASCGRFVNYVLNPCGHASLCTECCQRCDVCPICR. Disordered stretches follow at residues 678–699, 782–806, and 832–927; these read SGQFSEMEDASEGAKKSDLPDA, FKDLNRARGNSQLQGKRTEESSPEV, and VKSS…FAAR. Basic and acidic residues predominate over residues 797 to 806; that stretch reads KRTEESSPEV. Polar residues-rich tracts occupy residues 832-851 and 878-892; these read VKSSSNHLNGSSQKPESTFF and NNNNVLATESRNNSG. The span at 917-927 shows a compositional bias: basic residues; that stretch reads KGRRRRRFAAR.

As to quaternary structure, interacts with SCRM/ICE1, FLK and MSI4/FVE. As to expression, ubiquitously expressed with higher levels in leaf vasculature, roots and root tips.

The protein resides in the nucleus. The protein localises to the cytoplasm. The enzyme catalyses S-ubiquitinyl-[E2 ubiquitin-conjugating enzyme]-L-cysteine + [acceptor protein]-L-lysine = [E2 ubiquitin-conjugating enzyme]-L-cysteine + N(6)-ubiquitinyl-[acceptor protein]-L-lysine.. Its pathway is protein modification; protein ubiquitination. In terms of biological role, E3 ubiquitin-protein ligase that mediates ubiquitination and subsequent proteasomal degradation of the transcription factor ICE1. Acts as a negative regulator of cold signaling pathways. Probably involved in recruiting the NUP107-160 subcomplex of the nuclear pore complex to chromatin. Controls flowering time in response to ambient temperatures (16 and 23 degrees Celsius) and intermittent cold, probably via the regulation of FT and TSF levels. The sequence is that of E3 ubiquitin-protein ligase HOS1 (HOS1) from Arabidopsis thaliana (Mouse-ear cress).